Reading from the N-terminus, the 218-residue chain is Thiamine-phosphate synthase (218 aa).

Residues Gln36–Lys40 and Asp70 each bind 4-amino-2-methyl-5-(diphosphooxymethyl)pyrimidine. The Mg(2+) site is built by Asp71 and Asp94. Thr113 lines the 4-amino-2-methyl-5-(diphosphooxymethyl)pyrimidine pocket. Residue Thr141–Thr143 participates in 2-[(2R,5Z)-2-carboxy-4-methylthiazol-5(2H)-ylidene]ethyl phosphate binding. Lys144 lines the 4-amino-2-methyl-5-(diphosphooxymethyl)pyrimidine pocket.

It belongs to the thiamine-phosphate synthase family. Mg(2+) serves as cofactor.

It carries out the reaction 2-[(2R,5Z)-2-carboxy-4-methylthiazol-5(2H)-ylidene]ethyl phosphate + 4-amino-2-methyl-5-(diphosphooxymethyl)pyrimidine + 2 H(+) = thiamine phosphate + CO2 + diphosphate. The enzyme catalyses 2-(2-carboxy-4-methylthiazol-5-yl)ethyl phosphate + 4-amino-2-methyl-5-(diphosphooxymethyl)pyrimidine + 2 H(+) = thiamine phosphate + CO2 + diphosphate. The catalysed reaction is 4-methyl-5-(2-phosphooxyethyl)-thiazole + 4-amino-2-methyl-5-(diphosphooxymethyl)pyrimidine + H(+) = thiamine phosphate + diphosphate. It functions in the pathway cofactor biosynthesis; thiamine diphosphate biosynthesis; thiamine phosphate from 4-amino-2-methyl-5-diphosphomethylpyrimidine and 4-methyl-5-(2-phosphoethyl)-thiazole: step 1/1. Condenses 4-methyl-5-(beta-hydroxyethyl)thiazole monophosphate (THZ-P) and 2-methyl-4-amino-5-hydroxymethyl pyrimidine pyrophosphate (HMP-PP) to form thiamine monophosphate (TMP). The chain is Thiamine-phosphate synthase from Corynebacterium jeikeium (strain K411).